The chain runs to 384 residues: GTPase Obg (384 aa).

Residues 1-159 form the Obg domain; the sequence is MKFIDEAKIE…RSLQLELKVL (159 aa). Residues 20–46 are disordered; sequence ATSFRREKFVPRGGPDGGDGGKGGSVW. Gly residues predominate over residues 33 to 43; sequence GPDGGDGGKGG. The 189-residue stretch at 160-348 folds into the OBG-type G domain; the sequence is ADVGLLGMPN…LVHQINQYLT (189 aa). GTP is bound by residues 166 to 173, 191 to 195, 213 to 216, 284 to 287, and 329 to 331; these read GMPNAGKS, FTTLH, DIPG, NKLD, and SAL. Residues Ser-173 and Thr-193 each contribute to the Mg(2+) site.

Belongs to the TRAFAC class OBG-HflX-like GTPase superfamily. OBG GTPase family. Monomer. Mg(2+) serves as cofactor.

Its subcellular location is the cytoplasm. In terms of biological role, an essential GTPase which binds GTP, GDP and possibly (p)ppGpp with moderate affinity, with high nucleotide exchange rates and a fairly low GTP hydrolysis rate. Plays a role in control of the cell cycle, stress response, ribosome biogenesis and in those bacteria that undergo differentiation, in morphogenesis control. The sequence is that of GTPase Obg from Neisseria meningitidis serogroup C (strain 053442).